A 176-amino-acid polypeptide reads, in one-letter code: MNAENDSSLPKPQWIYRVGIGQDSHRFLSESSAKPCILAGVIFENSPGFQANSDGDIIFHAICNAISSVTHRIILGEVADELLHTRGITDSSVYLSEAIKSLKSNQMISHAAITIEGNRPKFLPKLSAMRQSIASALNIPLGSVGITATSGEGLSDFGCGDGVQCFCILTIMEYCG.

A divalent metal cation-binding residues include Asp23, His25, and His60. Position 23-25 (23-25) interacts with 4-CDP-2-C-methyl-D-erythritol 2-phosphate; it reads DSH. Residue 149-152 participates in 4-CDP-2-C-methyl-D-erythritol 2-phosphate binding; it reads TSGE.

The protein belongs to the IspF family. As to quaternary structure, homotrimer. The cofactor is a divalent metal cation.

The enzyme catalyses 4-CDP-2-C-methyl-D-erythritol 2-phosphate = 2-C-methyl-D-erythritol 2,4-cyclic diphosphate + CMP. It functions in the pathway isoprenoid biosynthesis; isopentenyl diphosphate biosynthesis via DXP pathway; isopentenyl diphosphate from 1-deoxy-D-xylulose 5-phosphate: step 4/6. Involved in the biosynthesis of isopentenyl diphosphate (IPP) and dimethylallyl diphosphate (DMAPP), two major building blocks of isoprenoid compounds. Catalyzes the conversion of 4-diphosphocytidyl-2-C-methyl-D-erythritol 2-phosphate (CDP-ME2P) to 2-C-methyl-D-erythritol 2,4-cyclodiphosphate (ME-CPP) with a corresponding release of cytidine 5-monophosphate (CMP). The sequence is that of 2-C-methyl-D-erythritol 2,4-cyclodiphosphate synthase from Chlamydia abortus (strain DSM 27085 / S26/3) (Chlamydophila abortus).